Here is a 142-residue protein sequence, read N- to C-terminus: Large ribosomal subunit protein bL17 (142 aa).

Belongs to the bacterial ribosomal protein bL17 family. In terms of assembly, part of the 50S ribosomal subunit. Contacts protein L32.

The polypeptide is Large ribosomal subunit protein bL17 (Wolbachia pipientis wMel).